Consider the following 360-residue polypeptide: Mitogen-activated protein kinase 14 (360 aa).

Ser2 carries the post-translational modification N-acetylserine. Ser2 carries the post-translational modification Phosphoserine. At Thr16 the chain carries Phosphothreonine. The Protein kinase domain occupies 24–308 (YQNLSPVGSG…AAQALAHAYF (285 aa)). ATP contacts are provided by residues 30–38 (VGSGAYGSV) and Lys53. N6-acetyllysine is present on Lys53. The active-site Proton acceptor is the Asp150. An N6-acetyllysine modification is found at Lys152. Thr180 carries the post-translational modification Phosphothreonine; by MAP2K3, MAP2K4, MAP2K6 and autocatalysis. The short motif at 180–182 (TGY) is the TXY element. Residue Tyr182 is modified to Phosphotyrosine; by MAP2K3, MAP2K4, MAP2K6 and autocatalysis. Phosphothreonine is present on Thr263. Tyr323 carries the post-translational modification Phosphotyrosine; by ZAP70.

This sequence belongs to the protein kinase superfamily. CMGC Ser/Thr protein kinase family. MAP kinase subfamily. As to quaternary structure, component of a signaling complex containing at least AKAP13, PKN1, MAPK14, ZAK and MAP2K3. Within this complex, AKAP13 interacts directly with PKN1, which in turn recruits MAPK14, MAP2K3 and ZAK. Binds to a kinase interaction motif within the protein tyrosine phosphatase, PTPRR. This interaction retains MAPK14 in the cytoplasm and prevents nuclear accumulation. Interacts with SPAG9 and GADD45A. Interacts with CDC25B, CDC25C, DUSP1, DUSP10, DUSP16, NP60, SUPT20H and TAB1. Interacts with casein kinase II subunits CSNK2A1 and CSNK2B. Interacts with PPM1D. Interacts with CDK5RAP3; recruits PPM1D to MAPK14 and may regulate its dephosphorylation. Interacts with DUSP2; this interaction does not lead to catalytic activation of DUSP2 and dephosphrylation of MAPK14. The cofactor is Mg(2+). Post-translationally, dually phosphorylated on Thr-180 and Tyr-182 by the MAP2Ks MAP2K3/MKK3, MAP2K4/MKK4 and MAP2K6/MKK6 in response to inflammatory citokines, environmental stress or growth factors, which activates the enzyme. Dual phosphorylation can also be mediated by TAB1-mediated autophosphorylation. TCR engagement in T-cells also leads to Tyr-323 phosphorylation by ZAP70. Dephosphorylated and inactivated by DUPS1, DUSP10 and DUSP16. PPM1D also mediates dephosphorylation and inactivation of MAPK14. In terms of processing, acetylated at Lys-53 and Lys-152 by KAT2B and EP300. Acetylation at Lys-53 increases the affinity for ATP and enhances kinase activity. Lys-53 and Lys-152 are deacetylated by HDAC3. Ubiquitinated. Ubiquitination leads to degradation by the proteasome pathway.

Its subcellular location is the cytoplasm. It localises to the nucleus. The catalysed reaction is L-seryl-[protein] + ATP = O-phospho-L-seryl-[protein] + ADP + H(+). It catalyses the reaction L-threonyl-[protein] + ATP = O-phospho-L-threonyl-[protein] + ADP + H(+). With respect to regulation, activated by cell stresses such as DNA damage, heat shock, osmotic shock, anisomycin and sodium arsenite, as well as pro-inflammatory stimuli such as bacterial lipopolysaccharide (LPS) and interleukin-1. Activation occurs through dual phosphorylation of Thr-180 and Tyr-182 by either of two dual specificity kinases, MAP2K3/MKK3 or MAP2K6/MKK6, and potentially also MAP2K4/MKK4, as well as by TAB1-mediated autophosphorylation. MAPK14 phosphorylated on both Thr-180 and Tyr-182 is 10-20-fold more active than MAPK14 phosphorylated only on Thr-180, whereas MAPK14 phosphorylated on Tyr-182 alone is inactive. whereas Thr-180 is necessary for catalysis, Tyr-182 may be required for auto-activation and substrate recognition. Phosphorylated at Tyr-323 by ZAP70 in an alternative activation pathway in response to TCR signaling in T-cells. This alternative pathway is inhibited by GADD45A. Inhibited by dual specificity phosphatases, such as DUSP1, DUSP10, and DUSP16. Specifically inhibited by the binding of pyridinyl-imidazole compounds, which are cytokine-suppressive anti-inflammatory drugs (CSAID). SB203580 is an inhibitor of MAPK14. Serine/threonine kinase which acts as an essential component of the MAP kinase signal transduction pathway. MAPK14 is one of the four p38 MAPKs which play an important role in the cascades of cellular responses evoked by extracellular stimuli such as pro-inflammatory cytokines or physical stress leading to direct activation of transcription factors. Accordingly, p38 MAPKs phosphorylate a broad range of proteins and it has been estimated that they may have approximately 200 to 300 substrates each. Some of the targets are downstream kinases which are activated through phosphorylation and further phosphorylate additional targets. RPS6KA5/MSK1 and RPS6KA4/MSK2 can directly phosphorylate and activate transcription factors such as CREB1, ATF1, the NF-kappa-B isoform RELA/NFKB3, STAT1 and STAT3, but can also phosphorylate histone H3 and the nucleosomal protein HMGN1. RPS6KA5/MSK1 and RPS6KA4/MSK2 play important roles in the rapid induction of immediate-early genes in response to stress or mitogenic stimuli, either by inducing chromatin remodeling or by recruiting the transcription machinery. On the other hand, two other kinase targets, MAPKAPK2/MK2 and MAPKAPK3/MK3, participate in the control of gene expression mostly at the post-transcriptional level, by phosphorylating ZFP36 (tristetraprolin) and ELAVL1, and by regulating EEF2K, which is important for the elongation of mRNA during translation. MKNK1/MNK1 and MKNK2/MNK2, two other kinases activated by p38 MAPKs, regulate protein synthesis by phosphorylating the initiation factor EIF4E2. MAPK14 also interacts with casein kinase II, leading to its activation through autophosphorylation and further phosphorylation of TP53/p53. In the cytoplasm, the p38 MAPK pathway is an important regulator of protein turnover. For example, CFLAR is an inhibitor of TNF-induced apoptosis whose proteasome-mediated degradation is regulated by p38 MAPK phosphorylation. In a similar way, MAPK14 phosphorylates the ubiquitin ligase SIAH2, regulating its activity towards EGLN3. MAPK14 may also inhibit the lysosomal degradation pathway of autophagy by interfering with the intracellular trafficking of the transmembrane protein ATG9. Another function of MAPK14 is to regulate the endocytosis of membrane receptors by different mechanisms that impinge on the small GTPase RAB5A. In addition, clathrin-mediated EGFR internalization induced by inflammatory cytokines and UV irradiation depends on MAPK14-mediated phosphorylation of EGFR itself as well as of RAB5A effectors. Ectodomain shedding of transmembrane proteins is regulated by p38 MAPKs as well. In response to inflammatory stimuli, p38 MAPKs phosphorylate the membrane-associated metalloprotease ADAM17. Such phosphorylation is required for ADAM17-mediated ectodomain shedding of TGF-alpha family ligands, which results in the activation of EGFR signaling and cell proliferation. Another p38 MAPK substrate is FGFR1. FGFR1 can be translocated from the extracellular space into the cytosol and nucleus of target cells, and regulates processes such as rRNA synthesis and cell growth. FGFR1 translocation requires p38 MAPK activation. In the nucleus, many transcription factors are phosphorylated and activated by p38 MAPKs in response to different stimuli. Classical examples include ATF1, ATF2, ATF6, ELK1, PTPRH, DDIT3, TP53/p53 and MEF2C and MEF2A. The p38 MAPKs are emerging as important modulators of gene expression by regulating chromatin modifiers and remodelers. The promoters of several genes involved in the inflammatory response, such as IL6, IL8 and IL12B, display a p38 MAPK-dependent enrichment of histone H3 phosphorylation on 'Ser-10' (H3S10ph) in LPS-stimulated myeloid cells. This phosphorylation enhances the accessibility of the cryptic NF-kappa-B-binding sites marking promoters for increased NF-kappa-B recruitment. Phosphorylates CDC25B and CDC25C which is required for binding to 14-3-3 proteins and leads to initiation of a G2 delay after ultraviolet radiation. Phosphorylates TIAR following DNA damage, releasing TIAR from GADD45A mRNA and preventing mRNA degradation. The p38 MAPKs may also have kinase-independent roles, which are thought to be due to the binding to targets in the absence of phosphorylation. Protein O-Glc-N-acylation catalyzed by the OGT is regulated by MAPK14, and, although OGT does not seem to be phosphorylated by MAPK14, their interaction increases upon MAPK14 activation induced by glucose deprivation. This interaction may regulate OGT activity by recruiting it to specific targets such as neurofilament H, stimulating its O-Glc-N-acylation. Required in mid-fetal development for the growth of embryo-derived blood vessels in the labyrinth layer of the placenta. Also plays an essential role in developmental and stress-induced erythropoiesis, through regulation of EPO gene expression. Phosphorylates S100A9 at 'Thr-113'. The polypeptide is Mitogen-activated protein kinase 14 (Canis lupus familiaris (Dog)).